We begin with the raw amino-acid sequence, 311 residues long: Methionyl-tRNA formyltransferase (311 aa).

109 to 112 (SLLP) provides a ligand contact to (6S)-5,6,7,8-tetrahydrofolate.

The protein belongs to the Fmt family.

It catalyses the reaction L-methionyl-tRNA(fMet) + (6R)-10-formyltetrahydrofolate = N-formyl-L-methionyl-tRNA(fMet) + (6S)-5,6,7,8-tetrahydrofolate + H(+). Functionally, attaches a formyl group to the free amino group of methionyl-tRNA(fMet). The formyl group appears to play a dual role in the initiator identity of N-formylmethionyl-tRNA by promoting its recognition by IF2 and preventing the misappropriation of this tRNA by the elongation apparatus. This chain is Methionyl-tRNA formyltransferase, found in Staphylococcus aureus (strain JH1).